The primary structure comprises 86 residues: Omega-theraphotoxin-Hhn1b (86 aa).

Residues 1–21 (MKSIVFVALFGLALLAVVCSA) form the signal peptide. The propeptide occupies 22–50 (SEDAHKELLKEVVRAMVVDKTDAVQAEER). 3 disulfide bridges follow: cysteine 52–cysteine 66, cysteine 59–cysteine 71, and cysteine 65–cysteine 78.

This sequence belongs to the neurotoxin 10 (Hwtx-1) family. 17 (Hntx-9) subfamily. Expressed by the venom gland.

It localises to the secreted. Functionally, ion channel inhibitor. The polypeptide is Omega-theraphotoxin-Hhn1b (Cyriopagopus hainanus (Chinese bird spider)).